A 521-amino-acid polypeptide reads, in one-letter code: MNNIPDDFKKIASSSRLPRKYCSSESSLSDDDGHEIEHVLKHGAPEEALTPDTERMVVLGQDVVQSAPASLVPGGNLSWMSKIKSAGASMMGSIRPSSSSQDVHSTGEIEKHSKKKWKARLWSTWNNIKYSSTWMSDRSDEYGGENDVVFLGRRYSTSVDESGLRSGFENFCSDYYSRLWITYRTDFPALLDTDTTTDCGWGCMIRTTQMMVAQAIMVNRFGRDWRFTRRKRSHVAAHGDEDDFDREKIQEWMILKLFEDKPTAPLGIHKMVGIAAMGKGKKAVGSWYSPSEAVFIMKKALTESSSPLTGNTAMLLSIDGRVHIRDIEVETKNWMKKLILVIVVRLGAAELNPIYVPHLMRLFAMESCLGITGGRPDHSSWFVGYYGDQIIYLDPHVAHEYIPIDINPNTNVVDSDSKKAKKCPEKSYHCRLLSKMHFFDMDPSCALCFQFESREQFDNDMRQLNLSQFIDIDQGEEHGMKRVRDPMFSVVYGERRQPPSYEREVSETEQAQADKHGFEML.

Residues 90–100 (MMGSIRPSSSS) are compositionally biased toward low complexity. Positions 90 to 109 (MMGSIRPSSSSQDVHSTGEI) are disordered. The active-site Nucleophile is Cys203. Catalysis depends on residues Asp394 and His396. Residues 499–521 (PSYEREVSETEQAQADKHGFEML) form a disordered region.

The protein belongs to the peptidase C54 family.

It localises to the cytoplasm. The catalysed reaction is [protein]-C-terminal L-amino acid-glycyl-phosphatidylethanolamide + H2O = [protein]-C-terminal L-amino acid-glycine + a 1,2-diacyl-sn-glycero-3-phosphoethanolamine. In terms of biological role, cysteine protease required for autophagy. Cleaves the C-terminal amino acid of ATG8 family proteins lgg-1, to reveal a C-terminal glycine. Exposure of the glycine at the C-terminus is essential for ATG8 proteins conjugation to phosphatidylethanolamine (PE) and insertion to membranes, which is necessary for autophagy. Its cleavage activity is functionally redundant to atg-4.1, but it cleaves lgg-1 precursors less efficiently than atg-4.1. In contrast to atg-4.1, plays a more significant role in the later phases of autophagy and in addition has a role in autophagosome maturation. Acts redundantly with atg-4.1 to promote the lgg-1 delipidation to release the protein from membranes, which facilitates multiple events during macroautophagy. Regulates the accumulation of autophagic structures in neurons and is specifically, required for the maturation and elimination of autophagosomes from the synaptic region of AIY interneurons. This is Cysteine protease atg-4.2 from Caenorhabditis elegans.